The sequence spans 213 residues: Thiamine-phosphate synthase (213 aa).

4-amino-2-methyl-5-(diphosphooxymethyl)pyrimidine contacts are provided by residues 38–42 (QLRIK) and Asn-70. Asp-71 and Asp-90 together coordinate Mg(2+). Residue Ser-109 participates in 4-amino-2-methyl-5-(diphosphooxymethyl)pyrimidine binding. Position 135–137 (135–137 (TQT)) interacts with 2-[(2R,5Z)-2-carboxy-4-methylthiazol-5(2H)-ylidene]ethyl phosphate. Lys-138 is a 4-amino-2-methyl-5-(diphosphooxymethyl)pyrimidine binding site. 2-[(2R,5Z)-2-carboxy-4-methylthiazol-5(2H)-ylidene]ethyl phosphate is bound by residues Gly-168 and 188-189 (VS).

The protein belongs to the thiamine-phosphate synthase family. Requires Mg(2+) as cofactor.

The enzyme catalyses 2-[(2R,5Z)-2-carboxy-4-methylthiazol-5(2H)-ylidene]ethyl phosphate + 4-amino-2-methyl-5-(diphosphooxymethyl)pyrimidine + 2 H(+) = thiamine phosphate + CO2 + diphosphate. It carries out the reaction 2-(2-carboxy-4-methylthiazol-5-yl)ethyl phosphate + 4-amino-2-methyl-5-(diphosphooxymethyl)pyrimidine + 2 H(+) = thiamine phosphate + CO2 + diphosphate. The catalysed reaction is 4-methyl-5-(2-phosphooxyethyl)-thiazole + 4-amino-2-methyl-5-(diphosphooxymethyl)pyrimidine + H(+) = thiamine phosphate + diphosphate. The protein operates within cofactor biosynthesis; thiamine diphosphate biosynthesis; thiamine phosphate from 4-amino-2-methyl-5-diphosphomethylpyrimidine and 4-methyl-5-(2-phosphoethyl)-thiazole: step 1/1. Condenses 4-methyl-5-(beta-hydroxyethyl)thiazole monophosphate (THZ-P) and 2-methyl-4-amino-5-hydroxymethyl pyrimidine pyrophosphate (HMP-PP) to form thiamine monophosphate (TMP). This Pectobacterium atrosepticum (strain SCRI 1043 / ATCC BAA-672) (Erwinia carotovora subsp. atroseptica) protein is Thiamine-phosphate synthase.